The sequence spans 370 residues: High affinity iron permease ftrA (370 aa).

The next 7 helical transmembrane spans lie at 5–25 (VFAV…SIIV), 52–72 (VWWG…GMIG), 88–108 (LWEG…GAAL), 148–168 (AMFL…VVFI), 179–199 (AFPL…YLLY), 206–226 (SLQI…AGLF), and 293–313 (YGSV…FVAM). The interval 335–370 (RKSAEPGNGEQDVEVSTIPSDLQTESKIPKSGASLV) is disordered. Positions 351-360 (TIPSDLQTES) are enriched in polar residues.

This sequence belongs to the oxidase-dependent Fe transporter (OFeT) (TC 9.A.10.1) family.

The protein resides in the cell membrane. Its function is as follows. High affinity iron permease; part of the reductive iron assimilatory system (RIA), a siderophore-independent high affinity iron uptake mechanism. This is High affinity iron permease ftrA from Aspergillus fumigatus (strain ATCC MYA-4609 / CBS 101355 / FGSC A1100 / Af293) (Neosartorya fumigata).